The primary structure comprises 142 residues: Protein tost-1 (142 aa).

Positions 97-123 (KVFEEEDKENAPTKKAVLKPSSTDEKK) are disordered.

In terms of assembly, component of the tost-1 variant of the PETISCO complex (also called the pid-3, erh-2, tofu-6, and ife-3 small RNA complex) containing at least tost-1, tofu-6, ife-3, pid-3, and erh-2, which plays an essential role in embryogenesis. Within the complex interacts with erh-2. Within the complex interacts with pid-3 and tofu-6. In contrast to the pid-1 variant of the PETISCO complex, the tost-1 variant of the PETISCO complex plays a minor role in the biogenesis of a class of 21 nucleotide PIWI-interacting RNAs (piRNAs) that possess a uracil residue at the 5'-end (also called 21U-RNAs). Expressed in the germline.

It localises to the cytoplasm. It is found in the nucleus. In terms of biological role, component of the tost-1 variant of the PETISCO complex which plays an essential role in embryogenesis. Within the complex acts as an adapter which binds to the complex via erh-2. Does not seem to play a role in the biogenesis of a class of 21 nucleotide PIWI-interacting RNAs (piRNAs) that possess a uracil residue at the 5'-end (also called 21U-RNAs). May inhibit 21U-RNA accumulation. Required for chromosome segregation and cell division in early embryos. This Caenorhabditis elegans protein is Protein tost-1.